The primary structure comprises 281 residues: Ribulose-5-phosphate-3-epimerase, chloroplastic (281 aa).

The transit peptide at 1–45 (MSTSAASLCCSSTQVNGFGLRPERSLLYQPTSFSFSRRRTHGIVK) directs the protein to the chloroplast. Substrate is bound at residue S63. Positions 88, 90, and 121 each coordinate a divalent metal cation. Catalysis depends on D90, which acts as the Proton acceptor. Substrate is bound by residues H121, 199-202 (GFGG), 232-234 (DGG), and 254-256 (GSA). D232 contacts a divalent metal cation. D232 serves as the catalytic Proton donor.

The protein belongs to the ribulose-phosphate 3-epimerase family. As to quaternary structure, homooctamer. The cofactor is Co(2+). It depends on Fe(2+) as a cofactor. Mn(2+) is required as a cofactor. Zn(2+) serves as cofactor. In terms of tissue distribution, present in roots, seeds and flowers. Accumulates in nematode feeding sites (NFS).

The protein localises to the plastid. The protein resides in the chloroplast thylakoid membrane. It catalyses the reaction D-ribulose 5-phosphate = D-xylulose 5-phosphate. Its pathway is carbohydrate biosynthesis; Calvin cycle. Essential protein required during embryogenesis. Catalyzes the reversible epimerization of D-ribulose 5-phosphate to D-xylulose 5-phosphate. Essential for the early steps of nematode feeding sites (NFS, multinucleated root cells) formation induced by the root-knot nematodes Heterodera schachtii, Meloidogyne incognita, M.javanica and M.hapla. The chain is Ribulose-5-phosphate-3-epimerase, chloroplastic from Arabidopsis thaliana (Mouse-ear cress).